Here is an 899-residue protein sequence, read N- to C-terminus: Toll-like receptor 4 (899 aa).

The signal sequence occupies residues 1 to 46; it reads MCPLQIHVLHLIQGNQKNRKGKYVNMTRQLWYILPLLFLLCHCVTS. N-linked (GlcNAc...) asparagine glycosylation is found at asparagine 25, asparagine 75, asparagine 83, and asparagine 93. Residues 47–702 lie on the Extracellular side of the membrane; sequence ERRCYFSKIS…LERNCRSYTA (656 aa). 7 LRR repeats span residues 83–103, 104–126, 128–150, 155–179, 181–202, 203–229, and 230–253; these read NESV…PDLP, RSLL…AFAR, QNLT…LTAG, LTRL…VLSD, VSLN…MRKI, HALK…YFQN, and VHGI…TFSY. N-linked (GlcNAc...) asparagine glycans are attached at residues asparagine 129, asparagine 137, asparagine 146, and asparagine 168. 4 N-linked (GlcNAc...) asparagine glycosylation sites follow: asparagine 237, asparagine 256, asparagine 275, and asparagine 313. LRR repeat units lie at residues 257-282, 313-336, 338-360, and 363-386; these read LTHL…DLKN, NTSL…VLMY, PKTL…ALET, and LVNL…IFSN. Residues asparagine 388, asparagine 432, and asparagine 463 are each glycosylated (N-linked (GlcNAc...) asparagine). LRR repeat units follow at residues 468 to 493, 501 to 524, 526 to 549, 554 to 577, 579 to 601, 602 to 624, and 631 to 654; these read HYPL…VFYD, LEGL…FFDY, TGLK…EKGE, LLKL…ILRN, ISLE…LKHI, KGLR…VMRE, and SSNL…HFLR. Residue asparagine 516 is glycosylated (N-linked (GlcNAc...) asparagine). N-linked (GlcNAc...) asparagine glycosylation is found at asparagine 633, asparagine 637, and asparagine 668. The chain crosses the membrane as a helical span at residues 703-723; the sequence is VIVLFSCVFVILLTVIVCGVV. The Cytoplasmic segment spans residues 724-899; the sequence is YRYRWKLRYL…WRKLRDPISM (176 aa). The TIR domain occupies 756 to 897; that stretch reads YEFDAFISYA…IFWRKLRDPI (142 aa).

The protein belongs to the Toll-like receptor family. In terms of tissue distribution, expressed in all tissues tested. The highest expression is in the hepatopancreas, with moderate expression in the gills, and low expression in the gonads, adductor muscle, hemocytes, and mantle.

It is found in the cell membrane. In terms of biological role, may be involved in the innate immune response. In Pinctada imbricata (Atlantic pearl-oyster), this protein is Toll-like receptor 4.